A 588-amino-acid polypeptide reads, in one-letter code: Protein kintoun (588 aa).

3 disordered regions span residues 199–223 (PGYE…PENS), 338–498 (PPLE…SSQE), and 510–535 (AANV…ADED). Over residues 202–212 (EAKEPPEERDL) the composition is skewed to basic and acidic residues. The span at 350-361 (PNPTSDPQNENQ) shows a compositional bias: polar residues. Composition is skewed to basic and acidic residues over residues 362–382 (TRVE…HQRG) and 393–433 (QVLE…KFEL). Over residues 435-447 (DVQQENKGNCSNT) the composition is skewed to polar residues. Residues 448–460 (KEVKCCRRTKDSL) are compositionally biased toward basic and acidic residues.

Belongs to the PIH1 family. Kintoun subfamily.

It localises to the cytoplasm. The protein resides in the dynein axonemal particle. Required for cytoplasmic pre-assembly of axonemal dyneins, thereby playing a central role in motility in cilia and flagella. Involved in pre-assembly of dynein arm complexes in the cytoplasm before intraflagellar transport loads them for the ciliary compartment. This is Protein kintoun from Oryzias latipes (Japanese rice fish).